Reading from the N-terminus, the 548-residue chain is Chaperonin GroEL (548 aa).

ATP contacts are provided by residues threonine 30–proline 33, lysine 51, aspartate 87–threonine 91, glycine 415, asparagine 479–alanine 481, and aspartate 495. Positions lysine 526–methionine 548 are disordered. The segment covering proline 537–methionine 548 has biased composition (gly residues).

The protein belongs to the chaperonin (HSP60) family. As to quaternary structure, forms a cylinder of 14 subunits composed of two heptameric rings stacked back-to-back. Interacts with the co-chaperonin GroES.

The protein localises to the cytoplasm. The enzyme catalyses ATP + H2O + a folded polypeptide = ADP + phosphate + an unfolded polypeptide.. Its function is as follows. Together with its co-chaperonin GroES, plays an essential role in assisting protein folding. The GroEL-GroES system forms a nano-cage that allows encapsulation of the non-native substrate proteins and provides a physical environment optimized to promote and accelerate protein folding. The polypeptide is Chaperonin GroEL (Buchnera aphidicola subsp. Pterocomma populeum).